The primary structure comprises 83 residues: Small ribosomal subunit protein uS17 (83 aa).

The protein belongs to the universal ribosomal protein uS17 family. In terms of assembly, part of the 30S ribosomal subunit.

In terms of biological role, one of the primary rRNA binding proteins, it binds specifically to the 5'-end of 16S ribosomal RNA. The chain is Small ribosomal subunit protein uS17 from Colwellia psychrerythraea (strain 34H / ATCC BAA-681) (Vibrio psychroerythus).